Here is an 815-residue protein sequence, read N- to C-terminus: Phenylalanine--tRNA ligase beta subunit (815 aa).

The tRNA-binding domain maps to 39–153 (ASHAQGVVVG…NVPDLGQPVG (115 aa)). One can recognise a B5 domain in the interval 414–498 (KSAEPVKLRR…RLVGFDRFEA (85 aa)). Mg(2+) is bound by residues Asp476, Asp482, Glu485, and Glu486. Residues 721-814 (PTVPAMELDL…LVKQFSAELR (94 aa)) form the FDX-ACB domain.

The protein belongs to the phenylalanyl-tRNA synthetase beta subunit family. Type 1 subfamily. Tetramer of two alpha and two beta subunits. It depends on Mg(2+) as a cofactor.

The protein localises to the cytoplasm. The catalysed reaction is tRNA(Phe) + L-phenylalanine + ATP = L-phenylalanyl-tRNA(Phe) + AMP + diphosphate + H(+). The polypeptide is Phenylalanine--tRNA ligase beta subunit (Prochlorococcus marinus (strain MIT 9313)).